The sequence spans 494 residues: Sugiol synthase (494 aa).

A helical membrane pass occupies residues 3–23 (SFSLLAALFFISAATWFISSR). C437 contacts heme.

Belongs to the cytochrome P450 family. Heme serves as cofactor. In terms of tissue distribution, expressed in roots.

The protein localises to the membrane. It carries out the reaction ferruginol + 2 reduced [NADPH--hemoprotein reductase] + 2 O2 = sugiol + 2 oxidized [NADPH--hemoprotein reductase] + 3 H2O + 2 H(+). The enzyme catalyses ferruginol + reduced [NADPH--hemoprotein reductase] + O2 = 11-hydroxyferruginol + oxidized [NADPH--hemoprotein reductase] + H2O + H(+). It catalyses the reaction 11-hydroxyferruginol + 2 reduced [NADPH--hemoprotein reductase] + 2 O2 = 11-hydroxysugiol + 2 oxidized [NADPH--hemoprotein reductase] + 3 H2O + 2 H(+). It participates in secondary metabolite biosynthesis; terpenoid biosynthesis. In terms of biological role, monooxygenase that oxidizes ferruginol to produce sugiol. Oxidizes ferruginol at C-12 to produce 11-hydroxyferruginol. Can oxidize 11-hydroxyferruginol to 11-hydroxysugiol. These products are intermediates in tanshinone biosynthesis. The chain is Sugiol synthase from Salvia miltiorrhiza (Chinese sage).